The sequence spans 213 residues: Probable GH family 25 lysozyme 4 (213 aa).

The signal sequence occupies residues 1 to 19 (MRLFLLLITFIALFGAINA). One can recognise a Ch-type lysozyme domain in the interval 21–213 (SGVDISQGSS…VGYDFNWYPN (193 aa)). Catalysis depends on residues Asp24, Asp112, and Glu114.

The protein belongs to the glycosyl hydrolase 25 family.

The protein localises to the secreted. It carries out the reaction Hydrolysis of (1-&gt;4)-beta-linkages between N-acetylmuramic acid and N-acetyl-D-glucosamine residues in a peptidoglycan and between N-acetyl-D-glucosamine residues in chitodextrins.. In Dictyostelium discoideum (Social amoeba), this protein is Probable GH family 25 lysozyme 4.